We begin with the raw amino-acid sequence, 362 residues long: GTP 3',8-cyclase (362 aa).

The 221-residue stretch at 8–228 (SLGRPLRDLR…ARISSHWPID (221 aa)) folds into the Radical SAM core domain. Residue Arg-17 participates in GTP binding. [4Fe-4S] cluster contacts are provided by Cys-24 and Cys-28. Tyr-30 serves as a coordination point for S-adenosyl-L-methionine. Position 31 (Cys-31) interacts with [4Fe-4S] cluster. Arg-71 serves as a coordination point for GTP. Gly-75 lines the S-adenosyl-L-methionine pocket. Thr-102 provides a ligand contact to GTP. Residue Ser-126 participates in S-adenosyl-L-methionine binding. Lys-164 contacts GTP. Met-198 contributes to the S-adenosyl-L-methionine binding site. Positions 262 and 265 each coordinate [4Fe-4S] cluster. A GTP-binding site is contributed by 267 to 269 (RLR). Cys-279 contributes to the [4Fe-4S] cluster binding site. Residues 325–362 (ALDSDGSREDADESEASAVPGRSTHPGHRKVEMSYIGG) form a disordered region.

The protein belongs to the radical SAM superfamily. MoaA family. In terms of assembly, monomer and homodimer. It depends on [4Fe-4S] cluster as a cofactor.

It catalyses the reaction GTP + AH2 + S-adenosyl-L-methionine = (8S)-3',8-cyclo-7,8-dihydroguanosine 5'-triphosphate + 5'-deoxyadenosine + L-methionine + A + H(+). It functions in the pathway cofactor biosynthesis; molybdopterin biosynthesis. In terms of biological role, catalyzes the cyclization of GTP to (8S)-3',8-cyclo-7,8-dihydroguanosine 5'-triphosphate. The protein is GTP 3',8-cyclase of Acidothermus cellulolyticus (strain ATCC 43068 / DSM 8971 / 11B).